The primary structure comprises 229 residues: Sugar fermentation stimulation protein homolog (229 aa).

The protein belongs to the SfsA family.

The chain is Sugar fermentation stimulation protein homolog from Carboxydothermus hydrogenoformans (strain ATCC BAA-161 / DSM 6008 / Z-2901).